The chain runs to 435 residues: E3 ubiquitin-protein ligase itt1 (435 aa).

An RWD domain is found at 16 to 135 (DELIALQSIY…EHVRSIATIA (120 aa)). The TRIAD supradomain stretch occupies residues 170-420 (RKFQCNVCFD…DPVSSCYGML (251 aa)). Zn(2+) is bound by residues Cys-174, Cys-177, Cys-192, His-194, Cys-197, Cys-200, Cys-219, Cys-224, Cys-266, Cys-271, Cys-286, Cys-289, Cys-294, Cys-297, His-302, Cys-308, Cys-368, and Cys-371. An RING-type 1 zinc finger spans residues 174 to 224 (CNVCFDEFNGTDCFQLTRCGHVSCQSCLRDYYTMCIQEGMFSQIKCIDLDC). The IBR-type zinc finger occupies 245–308 (TNRYKELEEK…ATWHGDLSPC (64 aa)). The segment at 368 to 396 (CPTCDRVVERIDGCCHMNCLCGTHFCFLC) adopts an RING-type 2; atypical zinc-finger fold. Residue Cys-381 is part of the active site. Zn(2+)-binding residues include Cys-386, Cys-388, Cys-393, Cys-396, His-408, and Cys-416.

This sequence belongs to the RBR family. RNF14 subfamily.

It localises to the cytoplasm. Its subcellular location is the nucleus. It catalyses the reaction [E2 ubiquitin-conjugating enzyme]-S-ubiquitinyl-L-cysteine + [acceptor protein]-L-lysine = [E2 ubiquitin-conjugating enzyme]-L-cysteine + [acceptor protein]-N(6)-ubiquitinyl-L-lysine.. It participates in protein modification; protein ubiquitination. E3 ubiquitin-protein ligase involved in the rescue of stalled ribosomes by promoting ubiquitination and degradation of proteins on stalled ribosomes. Specifically required to resolve RNA-protein cross-links caused by reactive aldehydes, which trigger translation stress by stalling ribosomes: acts by catalying 'Lys-6'-linked ubiquitination of RNA-protein cross-links, leading to their degradation. This Schizosaccharomyces pombe (strain 972 / ATCC 24843) (Fission yeast) protein is E3 ubiquitin-protein ligase itt1 (itt1).